Here is a 95-residue protein sequence, read N- to C-terminus: Small ribosomal subunit protein bS16 (95 aa).

The protein belongs to the bacterial ribosomal protein bS16 family.

This chain is Small ribosomal subunit protein bS16, found in Mycoplasma genitalium (strain ATCC 33530 / DSM 19775 / NCTC 10195 / G37) (Mycoplasmoides genitalium).